Reading from the N-terminus, the 510-residue chain is NAD(P)H-quinone oxidoreductase subunit 2 A, chloroplastic (510 aa).

13 consecutive transmembrane segments (helical) span residues 24–44 (LLLFNGSFIFPECILIFGLIL), 57–77 (TPWLYFISSTSLVMSITALLF), 99–119 (IFQFLILLCSTLCIPLSVEYI), 124–144 (MAITEFLLFVLTATLGGMFLC), 149–169 (LITIFVAPECFSLCSYLLSGY), 183–203 (YLLMGGASSSILVYGFSWLYG), 229–249 (ISIALISITVGIGFKLSPAPF), 295–315 (WHLLLEILAILSMILGNLIAI), 323–343 (MLAYSSIGQIGYVIIGIIVGD), 354–374 (YMLFYISMNLGTFACIVLFGL), 395–415 (ALSSALCLLSLGGIPPLAGFF), 418–438 (LYLFWCGWQAGLYFLVSIGLL), and 484–504 (MIVCVIASTIPGISMNPIIAI).

The protein belongs to the complex I subunit 2 family. As to quaternary structure, NDH is composed of at least 16 different subunits, 5 of which are encoded in the nucleus.

The protein resides in the plastid. It is found in the chloroplast thylakoid membrane. The enzyme catalyses a plastoquinone + NADH + (n+1) H(+)(in) = a plastoquinol + NAD(+) + n H(+)(out). It carries out the reaction a plastoquinone + NADPH + (n+1) H(+)(in) = a plastoquinol + NADP(+) + n H(+)(out). NDH shuttles electrons from NAD(P)H:plastoquinone, via FMN and iron-sulfur (Fe-S) centers, to quinones in the photosynthetic chain and possibly in a chloroplast respiratory chain. The immediate electron acceptor for the enzyme in this species is believed to be plastoquinone. Couples the redox reaction to proton translocation, and thus conserves the redox energy in a proton gradient. The sequence is that of NAD(P)H-quinone oxidoreductase subunit 2 A, chloroplastic from Nuphar advena (Common spatterdock).